Reading from the N-terminus, the 225-residue chain is Small ribosomal subunit protein mS26 (225 aa).

The protein belongs to the mitochondrion-specific ribosomal protein mS26 family. Component of the mitochondrial ribosome small subunit (28S) which comprises a 12S rRNA and about 30 distinct proteins.

The protein resides in the mitochondrion. The chain is Small ribosomal subunit protein mS26 (mRpS26) from Drosophila melanogaster (Fruit fly).